Reading from the N-terminus, the 91-residue chain is Acylphosphatase (91 aa).

One can recognise an Acylphosphatase-like domain in the interval 5–91; sequence CLHAYVGGRV…QGIAGFIVRR (87 aa). Residues arginine 20 and asparagine 38 contribute to the active site.

It belongs to the acylphosphatase family.

It carries out the reaction an acyl phosphate + H2O = a carboxylate + phosphate + H(+). The protein is Acylphosphatase (acyP) of Pseudomonas paraeruginosa (strain DSM 24068 / PA7) (Pseudomonas aeruginosa (strain PA7)).